A 295-amino-acid chain; its full sequence is MNTILGSDTVKRGMAQMQKGGVIMDVVNAEQARIAEAAGAVAVMALERVPSDIRAAGGVARMANPKIVKEVMNAVSIPVMAKARIGHITEARVLEAMGVDYIDESEVLTPADDEFHLLKCEFTVPFVCGCRDLGEALRRIGEGASMLRTKGEPGTGNIVEAVRHIRKVNAQIRKVVAMNHDELMTEAKNLSAPFELLLQIKALGKLPVVNFAAGGVATPADAALMMELGADGVFVGSGIFKSEHPEKFAKAIVQATTHYQDYDLIARLSEELGEPMKGIEISRLQQHERMQERGW.

Residue Asp25 coordinates D-ribose 5-phosphate. Catalysis depends on Lys82, which acts as the Schiff-base intermediate with D-ribose 5-phosphate. Residue Gly154 coordinates D-ribose 5-phosphate. Arg166 is a binding site for D-glyceraldehyde 3-phosphate. D-ribose 5-phosphate contacts are provided by residues Gly215 and 236–237 (GS).

Belongs to the PdxS/SNZ family. In the presence of PdxT, forms a dodecamer of heterodimers.

The catalysed reaction is aldehydo-D-ribose 5-phosphate + D-glyceraldehyde 3-phosphate + L-glutamine = pyridoxal 5'-phosphate + L-glutamate + phosphate + 3 H2O + H(+). It participates in cofactor biosynthesis; pyridoxal 5'-phosphate biosynthesis. Functionally, catalyzes the formation of pyridoxal 5'-phosphate from ribose 5-phosphate (RBP), glyceraldehyde 3-phosphate (G3P) and ammonia. The ammonia is provided by the PdxT subunit. Can also use ribulose 5-phosphate and dihydroxyacetone phosphate as substrates, resulting from enzyme-catalyzed isomerization of RBP and G3P, respectively. This chain is Pyridoxal 5'-phosphate synthase subunit PdxS, found in Pasteurella multocida (strain Pm70).